Here is a 319-residue protein sequence, read N- to C-terminus: tRNA-cytidine(32) 2-sulfurtransferase (319 aa).

The PP-loop motif motif lies at 43–48; that stretch reads SGGKDS. [4Fe-4S] cluster is bound by residues Cys-118, Cys-121, and Cys-209.

The protein belongs to the TtcA family. Homodimer. Mg(2+) is required as a cofactor. It depends on [4Fe-4S] cluster as a cofactor.

The protein resides in the cytoplasm. It carries out the reaction cytidine(32) in tRNA + S-sulfanyl-L-cysteinyl-[cysteine desulfurase] + AH2 + ATP = 2-thiocytidine(32) in tRNA + L-cysteinyl-[cysteine desulfurase] + A + AMP + diphosphate + H(+). It functions in the pathway tRNA modification. Its function is as follows. Catalyzes the ATP-dependent 2-thiolation of cytidine in position 32 of tRNA, to form 2-thiocytidine (s(2)C32). The sulfur atoms are provided by the cysteine/cysteine desulfurase (IscS) system. In Neisseria gonorrhoeae (strain NCCP11945), this protein is tRNA-cytidine(32) 2-sulfurtransferase.